The sequence spans 274 residues: MNPEHSPLGKATVYAAQYDASLLFPIPRAGAREQLGITSALPFFGTDIWNAYELSWLNARGKPQVAVATFYVPAESPNIVESKSFKLYLGSFAQSKFDSLDAVRDTLKRDVSAACGASVSVQLVSPHDFGKLQMEELDGLSLDRLDLDTDVYEPDPSLLSAAQDEAPVEETLVSDLLRSNCPVTGQPDWGSVQIHYVGPQIDHAGLLRYIISFRNHTGFHEQCVERIFLDILHACKPLKLAVYARYTRRGGLDINPFRTNYNQPMPDNARTARQ.

Residue 80–82 (VES) coordinates substrate. NADPH is bound at residue 82–83 (SK). Cys-181 acts as the Thioimide intermediate in catalysis. Asp-188 functions as the Proton donor in the catalytic mechanism. 220–221 (HE) serves as a coordination point for substrate. 249–250 (RG) provides a ligand contact to NADPH.

Belongs to the GTP cyclohydrolase I family. QueF type 2 subfamily. In terms of assembly, homodimer.

It localises to the cytoplasm. The enzyme catalyses 7-aminomethyl-7-carbaguanine + 2 NADP(+) = 7-cyano-7-deazaguanine + 2 NADPH + 3 H(+). It functions in the pathway tRNA modification; tRNA-queuosine biosynthesis. Catalyzes the NADPH-dependent reduction of 7-cyano-7-deazaguanine (preQ0) to 7-aminomethyl-7-deazaguanine (preQ1). This Burkholderia ambifaria (strain ATCC BAA-244 / DSM 16087 / CCUG 44356 / LMG 19182 / AMMD) (Burkholderia cepacia (strain AMMD)) protein is NADPH-dependent 7-cyano-7-deazaguanine reductase.